A 275-amino-acid polypeptide reads, in one-letter code: Large ribosomal subunit protein uL2 (275 aa).

Residues 220 to 275 (VRGAAMNPRDHPHGGGEGRAPRGMPTPKTKWGKPARGVKTRHNPRTDPFIIRRRTR) form a disordered region. Over residues 227–239 (PRDHPHGGGEGRA) the composition is skewed to basic and acidic residues. Basic residues predominate over residues 249 to 262 (KWGKPARGVKTRHN).

It belongs to the universal ribosomal protein uL2 family. In terms of assembly, part of the 50S ribosomal subunit. Forms a bridge to the 30S subunit in the 70S ribosome.

Functionally, one of the primary rRNA binding proteins. Required for association of the 30S and 50S subunits to form the 70S ribosome, for tRNA binding and peptide bond formation. It has been suggested to have peptidyltransferase activity; this is somewhat controversial. Makes several contacts with the 16S rRNA in the 70S ribosome. The chain is Large ribosomal subunit protein uL2 from Roseiflexus sp. (strain RS-1).